Here is a 161-residue protein sequence, read N- to C-terminus: Decarboxylase (161 aa).

Positions 29-131 constitute an EthD domain; the sequence is QGMSEEAYRK…VGDHENFADT (103 aa).

Belongs to the tpcK family.

The enzyme catalyses atrochrysone carboxylate + H(+) = atrochrysone + CO2. The protein operates within secondary metabolite biosynthesis. In terms of biological role, decarboxylase; part of the gene cluster that mediates the biosynthesis of monodictyphenone, a prenyl xanthone derivative. The pathway begins with the synthesis of atrochrysone thioester by the polyketide synthase (PKS) mdpG. The atrochrysone carboxyl ACP thioesterase mdpF then breaks the thioester bond and releases the atrochrysone carboxylic acid from mdpG. The atrochrysone carboxylic acid is then converted to atrochrysone which is further transformed into emodin anthrone by mdpH-1 and mdpH-2. Emodin is further modified to yield monodictyphenone via several steps involving mdpB, mdpC mdpJ, mdpK and mdpL. These enzymes with xptA, xptB and xptC are also proposed to be involved in the synthesis of shamixanthone from emodin. Especially, direct reduction of emodin by the short chain dehydrogenase mdpC followed by dehydration catalyzed by the scytalone dehydratase-like protein mdpB gives loss of oxygen and formation of chrysophanol intermediate in two simple steps. This chain is Decarboxylase, found in Emericella nidulans (strain FGSC A4 / ATCC 38163 / CBS 112.46 / NRRL 194 / M139) (Aspergillus nidulans).